We begin with the raw amino-acid sequence, 214 residues long: Ribonuclease HII (214 aa).

Residues 26 to 214 (EIVCGVDEAG…PVRAALDLIR (189 aa)) form the RNase H type-2 domain. D32, E33, and D124 together coordinate a divalent metal cation.

The protein belongs to the RNase HII family. It depends on Mn(2+) as a cofactor. Mg(2+) serves as cofactor.

It localises to the cytoplasm. The enzyme catalyses Endonucleolytic cleavage to 5'-phosphomonoester.. Its function is as follows. Endonuclease that specifically degrades the RNA of RNA-DNA hybrids. This Burkholderia cenocepacia (strain HI2424) protein is Ribonuclease HII.